The following is a 393-amino-acid chain: Isocitrate dehydrogenase [NAD] subunit gamma 1, mitochondrial (393 aa).

The N-terminal 39 residues, 1-39 (MALKVAIAAGSAAKAIFKPALLCRPWEVLAAHEAPRRSI), are a transit peptide targeting the mitochondrion. A citrate-binding site is contributed by Thr120. At Ser130 the chain carries Phosphoserine. Asn133 contacts citrate. Arg136 and Arg167 together coordinate substrate. At Lys206 the chain carries N6-acetyllysine. Lys226 is modified (N6-succinyllysine). Residue Asp254 participates in substrate binding. Residue Asp254 coordinates Mn(2+). Residues Asn312, Thr313, and Asn324 each contribute to the ADP site.

Belongs to the isocitrate and isopropylmalate dehydrogenases family. In terms of assembly, heterooligomer of subunits alpha (IDH3A), beta (IDH3B), and gamma (IDH3G) in the apparent ratio of 2:1:1. The heterodimer containing one IDH3A and one IDH3B subunit and the heterodimer containing one IDH3A and one IDH3G subunit assemble into a heterotetramer (which contains two subunits of IDH3A, one of IDH3B and one of IDH3G) and further into the heterooctamer. Requires Mg(2+) as cofactor. It depends on Mn(2+) as a cofactor.

The protein localises to the mitochondrion. The heterotetramer and the heterodimer composed of IDH3A and IDH3G subunits can be allosterically activated by citrate (CIT) or/and ADP, and the two activators can act independently or synergistically. The heterodimer composed of IDH3A and IDH3B subunits cannot be allosterically regulated and the allosteric regulation of the heterotetramer is through the IDH3G subunit and not the IDH3B subunit. The IDH3G subunit contains the allosteric site which consists of a CIT-binding site and an ADP-binding site, and the binding of CIT and ADP causes conformational changes at the allosteric site which are transmitted to the active site in the catalytic subunit (IDH3A) through a cascade of conformational changes at the heterodimer interface, leading to stabilization of the isocitrate-binding at the active site and thus activation of the enzyme. ATP can activate the heterotetramer and the heterodimer composed of IDH3A and IDH3G subunits at low concentrations but inhibits their activities at high concentrations, whereas ATP exhibits only inhibitory effect on the heterodimer composed of IDH3A and IDH3B subunits. Its function is as follows. Regulatory subunit which plays a role in the allosteric regulation of the enzyme catalyzing the decarboxylation of isocitrate (ICT) into alpha-ketoglutarate. The heterodimer composed of the alpha (IDH3A) and beta (IDH3B) subunits and the heterodimer composed of the alpha (IDH3A) and gamma (IDH3G) subunits, have considerable basal activity but the full activity of the heterotetramer (containing two subunits of IDH3A, one of IDH3B and one of IDH3G) requires the assembly and cooperative function of both heterodimers. The chain is Isocitrate dehydrogenase [NAD] subunit gamma 1, mitochondrial (Idh3g) from Rattus norvegicus (Rat).